Here is a 129-residue protein sequence, read N- to C-terminus: Small ribosomal subunit protein uS8 (129 aa).

It belongs to the universal ribosomal protein uS8 family. As to quaternary structure, part of the 30S ribosomal subunit.

One of the primary rRNA binding proteins, it binds directly to 16S rRNA central domain where it helps coordinate assembly of the platform of the 30S subunit. This Methanothrix thermoacetophila (strain DSM 6194 / JCM 14653 / NBRC 101360 / PT) (Methanosaeta thermophila) protein is Small ribosomal subunit protein uS8.